The primary structure comprises 136 residues: Large ribosomal subunit protein uL16 (136 aa).

Belongs to the universal ribosomal protein uL16 family. As to quaternary structure, part of the 50S ribosomal subunit.

Binds 23S rRNA and is also seen to make contacts with the A and possibly P site tRNAs. The protein is Large ribosomal subunit protein uL16 of Buchnera aphidicola subsp. Baizongia pistaciae (strain Bp).